A 410-amino-acid chain; its full sequence is F-box protein At3g61340 (410 aa).

Residues 17 to 66 (EEKSERIPFDLVIEILLRLPVKSIARFRYVSKLWQSTLRGQHFTESYLTI) enclose the F-box domain.

The polypeptide is F-box protein At3g61340 (Arabidopsis thaliana (Mouse-ear cress)).